The primary structure comprises 347 residues: UDP-N-acetylenolpyruvoylglucosamine reductase (347 aa).

An FAD-binding PCMH-type domain is found at 16 to 187; the sequence is AIEQCSHYLV…IAVGLKLPKT (172 aa). Arg-163 is an active-site residue. Ser-233 (proton donor) is an active-site residue. The active site involves Glu-328.

It belongs to the MurB family. Requires FAD as cofactor.

It is found in the cytoplasm. The enzyme catalyses UDP-N-acetyl-alpha-D-muramate + NADP(+) = UDP-N-acetyl-3-O-(1-carboxyvinyl)-alpha-D-glucosamine + NADPH + H(+). The protein operates within cell wall biogenesis; peptidoglycan biosynthesis. In terms of biological role, cell wall formation. This is UDP-N-acetylenolpyruvoylglucosamine reductase from Vibrio vulnificus (strain CMCP6).